A 138-amino-acid polypeptide reads, in one-letter code: Thioredoxin H2-1 (138 aa).

The interval 1–20 is disordered; that stretch reads MGGAFSTSKPKPAAGEEGGE. Positions 12-129 constitute a Thioredoxin domain; the sequence is PAAGEEGGES…LEKTINTLRS (118 aa). Active-site nucleophile residues include Cys-55 and Cys-58. A disulfide bond links Cys-55 and Cys-58.

It belongs to the thioredoxin family. Plant H-type subfamily.

It localises to the cytoplasm. Functionally, probable thiol-disulfide oxidoreductase that may be involved in the redox regulation of a number of cytosolic enzymes. This is Thioredoxin H2-1 from Oryza sativa subsp. japonica (Rice).